A 591-amino-acid polypeptide reads, in one-letter code: Probable translation initiation factor IF-2 (591 aa).

Positions 7–223 (LRTPIVCVMG…LLGLAQRFLE (217 aa)) constitute a tr-type G domain. A G1 region spans residues 16–23 (GHVDHGKT). Residue 16–23 (GHVDHGKT) coordinates GTP. The segment at 41–45 (AITQH) is G2. The G3 stretch occupies residues 78–81 (DTPG). GTP-binding positions include 78 to 82 (DTPGH) and 132 to 135 (NKID). The segment at 132-135 (NKID) is G4. A G5 region spans residues 200 to 202 (SAI).

Belongs to the TRAFAC class translation factor GTPase superfamily. Classic translation factor GTPase family. IF-2 subfamily.

Function in general translation initiation by promoting the binding of the formylmethionine-tRNA to ribosomes. Seems to function along with eIF-2. This Methanococcoides burtonii (strain DSM 6242 / NBRC 107633 / OCM 468 / ACE-M) protein is Probable translation initiation factor IF-2.